The primary structure comprises 173 residues: Ribosome maturation factor RimM (173 aa).

Positions 98 to 170 (VGDMTWDSFI…SLTVSLPEGL (73 aa)) constitute a PRC barrel domain.

Belongs to the RimM family. Binds ribosomal protein uS19.

It is found in the cytoplasm. In terms of biological role, an accessory protein needed during the final step in the assembly of 30S ribosomal subunit, possibly for assembly of the head region. Essential for efficient processing of 16S rRNA. May be needed both before and after RbfA during the maturation of 16S rRNA. It has affinity for free ribosomal 30S subunits but not for 70S ribosomes. The sequence is that of Ribosome maturation factor RimM from Parabacteroides distasonis (strain ATCC 8503 / DSM 20701 / CIP 104284 / JCM 5825 / NCTC 11152).